The following is a 155-amino-acid chain: Egg-lysin (155 aa).

The first 18 residues, 1-18 (MKLLVLCLFAMMATLAVS), serve as a signal peptide directing secretion.

In terms of assembly, monomer. Homodimer. Molecules associate into dimers and then rapidly dissociate again. Interacts (as a monomer) with the egg vitelline layer protein VERL (via VERL repeats); each VERL chain can bind multiple copies of lysin. Sperm (at protein level).

It localises to the cytoplasmic vesicle. The protein resides in the secretory vesicle. It is found in the acrosome lumen. Creates a 3 um hole in the egg vitelline layer through which the sperm passes. Does not have enzyme activity. Species-specific interaction between the sperm protein lysin and the egg protein VERL exposes a basic surface on lysin that may dissociate the egg vitelline layer via electrostatic repulsion. Plays a role in ensuring species-specific fertilization. This Haliotis corrugata (Pink abalone) protein is Egg-lysin.